A 25-amino-acid chain; its full sequence is Growth-blocking peptide (25 aa).

An intrachain disulfide couples Cys7 to Cys19. Gln25 is subject to Glutamine amide.

It belongs to the GBP/PSP1/paralytic peptide family. Hemolymph.

Biogenic peptide that prevents, in lepidopteran, the onset of metamorphosis from larva to pupa. This growth-blocking peptide has repressive activity against juvenile hormone esterase. This Cotesia kariyai (Parasitic wasp) protein is Growth-blocking peptide.